A 118-amino-acid chain; its full sequence is Vesicle-associated membrane protein 1 (118 aa).

Residues 1–15 are compositionally biased toward low complexity; it reads MSAPAQPPTEGAEGA. A disordered region spans residues 1–36; the sequence is MSAPAQPPTEGAEGAAPGGGPPGPPPNMTSNRRLQQ. Topologically, residues 1–96 are cytoplasmic; sequence MSAPAQPPTE…KRKYWWKNCK (96 aa). Positions 33-93 constitute a v-SNARE coiled-coil homology domain; it reads RLQQTQAQVE…AKLKRKYWWK (61 aa). Phosphoserine is present on serine 63. A helical; Anchor for type IV membrane protein membrane pass occupies residues 97-116; sequence MMIMLGAICAIIVVVIVIYF. At 117-118 the chain is on the vesicular side; it reads FA.

The protein belongs to the synaptobrevin family. Interacts with VAPA and VAPB.

It localises to the cytoplasmic vesicle. Its subcellular location is the secretory vesicle. The protein resides in the synaptic vesicle membrane. It is found in the synapse. The protein localises to the synaptosome. It localises to the cytoplasmic vesicle membrane. In terms of biological role, involved in the targeting and/or fusion of transport vesicles to their target membrane. The protein is Vesicle-associated membrane protein 1 (VAMP1) of Bos taurus (Bovine).